Here is a 628-residue protein sequence, read N- to C-terminus: Basal cell adhesion molecule (628 aa).

The N-terminal stretch at 1–31 (MEPPDAPAQARGAPRLLLLAVLLAAHPDAQA) is a signal peptide. 2 consecutive Ig-like V-type domains span residues 32-142 (EVRL…ARLN) and 147-257 (PEAT…PTFH). Topologically, residues 32–547 (EVRLSVPPLV…GTVSPQTSQA (516 aa)) are extracellular. Cystine bridges form between C53–C125, C172–C237, and C291–C337. 3 consecutive Ig-like C2-type domains span residues 274 to 355 (PSTP…KTLE), 363 to 441 (PLEL…QNFT), and 448 to 541 (PELK…GTVS). The tract at residues 309–312 (EQEE) is interaction with laminin alpha5. N321, N377, N383, N419, and N439 each carry an N-linked (GlcNAc...) asparagine glycan. A disulfide bridge connects residues C384 and C424. C473 and C522 are disulfide-bonded. The chain crosses the membrane as a helical span at residues 548–568 (GVAVMAVAVSVGLLLLVVAVF). Over 569–628 (YCVRRKGGPCCRQRREKGAPPPGEPGLSHSGSEQPEQTGLLMGGASGGARGGSGGFGDEC) the chain is Cytoplasmic. Positions 579–628 (CRQRREKGAPPPGEPGLSHSGSEQPEQTGLLMGGASGGARGGSGGFGDEC) are disordered. S596 is modified (phosphoserine; by GSK3). S598 is subject to Phosphoserine; by CK2. S600 carries the post-translational modification Phosphoserine. Positions 609–628 (LMGGASGGARGGSGGFGDEC) are enriched in gly residues. S621 bears the Phosphoserine; by PKA or PKB/AKT1 mark.

Homodimer. Interacts with ITGA4:ITGB1. Interacts with spectrins SPTA1 and SPTB1. Post-translationally, epinephrine-stimulated phosphorylation of Ser-621 by PKA enhances adhesion to laminin. Ser-621 can also be phosphorylated by AKT1. Wide tissue distribution (highest in the pancreas and very low in brain). Closely associated with the basal layer of cells in epithelia and the endothelium of blood vessel walls.

The protein localises to the cell membrane. In terms of biological role, transmembrane glycoprotein that functions as both a receptor and an adhesion molecule playing a crucial role in cell adhesion, motility, migration and invasion. Extracellular domain enables binding to extracellular matrix proteins, such as laminin, integrin and other ligands while its intracellular domain interacts with cytoskeletal proteins like hemoglobin, facilitating cell signal transduction. Serves as a receptor for laminin alpha-5/LAMA5 to promote cell adhesion. Mechanistically, JAK2 induces BCAM phosphorylation and activates its adhesion to laminin by stimulating a Rap1/AKT signaling pathway in the absence of EPOR. The polypeptide is Basal cell adhesion molecule (BCAM) (Homo sapiens (Human)).